We begin with the raw amino-acid sequence, 258 residues long: Aspartate/glutamate leucyltransferase (258 aa).

It belongs to the R-transferase family. Bpt subfamily.

The protein localises to the cytoplasm. The catalysed reaction is N-terminal L-glutamyl-[protein] + L-leucyl-tRNA(Leu) = N-terminal L-leucyl-L-glutamyl-[protein] + tRNA(Leu) + H(+). The enzyme catalyses N-terminal L-aspartyl-[protein] + L-leucyl-tRNA(Leu) = N-terminal L-leucyl-L-aspartyl-[protein] + tRNA(Leu) + H(+). Its function is as follows. Functions in the N-end rule pathway of protein degradation where it conjugates Leu from its aminoacyl-tRNA to the N-termini of proteins containing an N-terminal aspartate or glutamate. The sequence is that of Aspartate/glutamate leucyltransferase from Bradyrhizobium sp. (strain BTAi1 / ATCC BAA-1182).